Reading from the N-terminus, the 302-residue chain is Glutaminase (302 aa).

7 residues coordinate substrate: S61, N111, E155, N162, Y186, Y238, and V256.

Belongs to the glutaminase family. In terms of assembly, homotetramer.

It carries out the reaction L-glutamine + H2O = L-glutamate + NH4(+). This chain is Glutaminase, found in Pseudomonas putida (strain ATCC 700007 / DSM 6899 / JCM 31910 / BCRC 17059 / LMG 24140 / F1).